A 158-amino-acid chain; its full sequence is Disulfide bond formation protein B (158 aa).

Topologically, residues 1-7 (MKNSRPV) are cytoplasmic. The helical transmembrane segment at 8–24 (LFAVALASLLLLAVALY) threads the bilayer. At 25 to 42 (LQHVENMLPCPLCVIQRY) the chain is on the periplasmic side. Cys-34 and Cys-37 are disulfide-bonded. The chain crosses the membrane as a helical span at residues 43 to 57 (AFAAIALICLVTAFR). Over 58 to 63 (TEVTAR) the chain is Cytoplasmic. Residues 64-81 (IGAALAALASLAGAGVAG) traverse the membrane as a helical segment. The Periplasmic segment spans residues 82–136 (WHIYIKAHPTVSCGIDPLETSLNTIPTAKLLPFLLQADGLCTTEYAPIMGLSIPQ). A disulfide bridge connects residues Cys-94 and Cys-122. Residues 137–155 (WALVWFIVIALFLLHTAFR) traverse the membrane as a helical segment. Residues 156-158 (KKS) are Cytoplasmic-facing.

It belongs to the DsbB family.

The protein resides in the cell inner membrane. In terms of biological role, required for disulfide bond formation in some periplasmic proteins. Acts by oxidizing the DsbA protein. In Herminiimonas arsenicoxydans, this protein is Disulfide bond formation protein B.